Here is a 504-residue protein sequence, read N- to C-terminus: ATP synthase subunit beta (504 aa).

Residue 181–188 (GGAGVGKT) participates in ATP binding.

Belongs to the ATPase alpha/beta chains family. As to quaternary structure, F-type ATPases have 2 components, CF(1) - the catalytic core - and CF(0) - the membrane proton channel. CF(1) has five subunits: alpha(3), beta(3), gamma(1), delta(1), epsilon(1). CF(0) has three main subunits: a(1), b(2) and c(9-12). The alpha and beta chains form an alternating ring which encloses part of the gamma chain. CF(1) is attached to CF(0) by a central stalk formed by the gamma and epsilon chains, while a peripheral stalk is formed by the delta and b chains.

It is found in the cell inner membrane. The catalysed reaction is ATP + H2O + 4 H(+)(in) = ADP + phosphate + 5 H(+)(out). Produces ATP from ADP in the presence of a proton gradient across the membrane. The catalytic sites are hosted primarily by the beta subunits. The polypeptide is ATP synthase subunit beta (Ehrlichia ruminantium (strain Welgevonden)).